Here is a 414-residue protein sequence, read N- to C-terminus: Multifunctional CCA protein (414 aa).

Gly-8 and Arg-11 together coordinate ATP. The CTP site is built by Gly-8 and Arg-11. Residues Asp-21 and Asp-23 each coordinate Mg(2+). Residues Arg-91, Arg-137, and Arg-140 each coordinate ATP. Positions 91, 137, and 140 each coordinate CTP. Positions 228 to 329 (TGIHTLMVLE…VKLFDKGDFW (102 aa)) constitute an HD domain.

Belongs to the tRNA nucleotidyltransferase/poly(A) polymerase family. Bacterial CCA-adding enzyme type 1 subfamily. In terms of assembly, monomer. Can also form homodimers and oligomers. It depends on Mg(2+) as a cofactor. The cofactor is Ni(2+).

The enzyme catalyses a tRNA precursor + 2 CTP + ATP = a tRNA with a 3' CCA end + 3 diphosphate. It catalyses the reaction a tRNA with a 3' CCA end + 2 CTP + ATP = a tRNA with a 3' CCACCA end + 3 diphosphate. In terms of biological role, catalyzes the addition and repair of the essential 3'-terminal CCA sequence in tRNAs without using a nucleic acid template. Adds these three nucleotides in the order of C, C, and A to the tRNA nucleotide-73, using CTP and ATP as substrates and producing inorganic pyrophosphate. tRNA 3'-terminal CCA addition is required both for tRNA processing and repair. Also involved in tRNA surveillance by mediating tandem CCA addition to generate a CCACCA at the 3' terminus of unstable tRNAs. While stable tRNAs receive only 3'-terminal CCA, unstable tRNAs are marked with CCACCA and rapidly degraded. The sequence is that of Multifunctional CCA protein from Shewanella frigidimarina (strain NCIMB 400).